A 55-amino-acid polypeptide reads, in one-letter code: MAKAVTIKIKLVSTADTGFYYVTKKNSRTMTDKMVKKKYDPVARKHVEFKEAKIK.

In terms of processing, the protein is methylated on either Ala-2 or Lys-3.

The protein is Large ribosomal subunit protein bL33 of Rhodopseudomonas palustris (strain ATCC BAA-98 / CGA009).